Consider the following 50-residue polypeptide: Mating-type pheromone BAP1(1) (50 aa).

Residues 1-32 form a disordered region; that stretch reads MDGEGHDINIWGARMSPSPAAAPVSATRGAPW. Low complexity predominate over residues 16 to 26; sequence SPSPAAAPVSA. Cys47 carries the cysteine methyl ester modification. Residue Cys47 is the site of S-farnesyl cysteine attachment. Positions 48 to 50 are cleaved as a propeptide — removed in mature form; that stretch reads VCH.

The protein localises to the cell membrane. Functionally, activates B-regulated development. This Schizophyllum commune (Split gill fungus) protein is Mating-type pheromone BAP1(1) (BAP1(1)).